Here is a 351-residue protein sequence, read N- to C-terminus: Xaa-Pro dipeptidase (351 aa).

Co(2+) contacts are provided by D212, D223, H287, E316, and E330.

It belongs to the peptidase M24B family. Archaeal-type prolidase subfamily. Homodimer. Co(2+) is required as a cofactor.

It localises to the cytoplasm. The catalysed reaction is Xaa-L-Pro dipeptide + H2O = an L-alpha-amino acid + L-proline. Functionally, splits dipeptides with a prolyl in the C-terminal position and a nonpolar amino acid at the N-terminal position. The protein is Xaa-Pro dipeptidase (pepQ) of Pyrococcus horikoshii (strain ATCC 700860 / DSM 12428 / JCM 9974 / NBRC 100139 / OT-3).